Consider the following 361-residue polypeptide: Beta-hexosaminidase (361 aa).

Residues aspartate 69, arginine 77, arginine 144, and lysine 174–histidine 175 contribute to the substrate site. Histidine 187 functions as the Proton donor/acceptor in the catalytic mechanism. The active-site Nucleophile is aspartate 258.

This sequence belongs to the glycosyl hydrolase 3 family. NagZ subfamily.

The protein resides in the cytoplasm. The enzyme catalyses Hydrolysis of terminal non-reducing N-acetyl-D-hexosamine residues in N-acetyl-beta-D-hexosaminides.. The protein operates within cell wall biogenesis; peptidoglycan recycling. Plays a role in peptidoglycan recycling by cleaving the terminal beta-1,4-linked N-acetylglucosamine (GlcNAc) from peptide-linked peptidoglycan fragments, giving rise to free GlcNAc, anhydro-N-acetylmuramic acid and anhydro-N-acetylmuramic acid-linked peptides. The polypeptide is Beta-hexosaminidase (Neisseria gonorrhoeae (strain ATCC 700825 / FA 1090)).